We begin with the raw amino-acid sequence, 629 residues long: Neuronal acetylcholine receptor subunit alpha-4 (629 aa).

A signal peptide spans 1 to 30 (MEIGGSGAPPPLLLLPLLLLLGTGLLPASS). Residues 32-249 (IETRAHAEER…IIRRLPLFYT (218 aa)) lie on the Extracellular side of the membrane. N59 carries an N-linked (GlcNAc...) asparagine glycan. Ca(2+) is bound by residues V78 and E80. N-linked (GlcNAc...) asparagine glycans are attached at residues N109 and N176. Cystine bridges form between C163–C177 and C227–C228. Residues 250 to 270 (INLIIPCLLISCLTVLVFYLP) traverse the membrane as a helical segment. A lipid anchor (S-palmitoyl cysteine) is attached at C273. A run of 2 helical transmembrane segments spans residues 279 to 299 (LCIS…EIIP) and 312 to 332 (LLFT…VLNV). Topologically, residues 333 to 603 (HHRSPRTHTM…KYVAMVIDRI (271 aa)) are cytoplasmic. Disordered stretches follow at residues 420–459 (ETQP…NSSG) and 503–529 (SLTE…SDQT). Residue S427 is modified to Phosphoserine. The span at 431–442 (KVPDLKTSEVEK) shows a compositional bias: basic and acidic residues. Residues 449–459 (PGSCHPPNSSG) are compositionally biased toward low complexity. The segment covering 504-529 (LTESKPTGSPASLKTRPSQLPVSDQT) has biased composition (polar residues). Residues S540 and S543 each carry the phosphoserine modification. Residues 604-624 (FLWMFIIVCLLGTVGLFLPPW) traverse the membrane as a helical segment.

The protein belongs to the ligand-gated ion channel (TC 1.A.9) family. Acetylcholine receptor (TC 1.A.9.1) subfamily. Alpha-4/CHRNA4 sub-subfamily. Neuronal AChR is composed of two different types of subunits: alpha and beta. CHRNA4 forms heteropentameric neuronal acetylcholine receptors with CHRNB2 and CHRNB4, as well as CHRNA5 and CHRNB3 as accesory subunits. Found in two major stoichiometric forms, LS (low agonist sensitivity): (CHRNA4)3:(CHRNB2)2 and HS (high agonist sensitivity): (CHRNA4)2:(CHRNB2)3, the two stoichiometric forms differ in their unitary conductance, calcium permeability, ACh sensitivity and potentiation by divalent cation. Cells produce predominantly an (CHRNA4)3:(CHRNB2)2 nAChR. The (CHRNA4)2:(CHRNB2)3 expression is selectively up-regulated by nicotine and has lower single channel conductance and calcium permeability. In the striatum, also forms CHRNA4:CHRNA6:CHRNB2 complexes. Also found in the stoichiometric form: (CHRNA4:CHRNB2)2:CHRNB3. Interacts with RIC3; which is required for proper folding and assembly. Interacts with LYPD6.

Its subcellular location is the synaptic cell membrane. The protein resides in the cell membrane. It catalyses the reaction K(+)(in) = K(+)(out). The catalysed reaction is Na(+)(in) = Na(+)(out). It carries out the reaction Ca(2+)(in) = Ca(2+)(out). With respect to regulation, activated by a myriad of ligands such as acetylcholine, cytisine, nicotine, choline and epibatidine. Channel potentiation by calcium is stoichiometry-selective, CHRNA4:CHRNB2 nACh receptor is achieved by calcium association with topographically distinct sites framed by anionic residues within the CHRNA4 subunit and between the CHRNA4 and CHRNB2 subunits. nAChR activity is inhibited by the antagonist alpha-conotoxins BuIA, PnIA, GID and MII, small disulfide-constrained peptides from cone snails. Functionally, component of neuronal acetylcholine receptors (nAChRs) that function as pentameric, ligand-gated cation channels with high calcium permeability among other activities. nAChRs are excitatory neurotrasnmitter receptors formed by a collection of nAChR subunits known to mediate synaptic transmission in the nervous system and the neuromuscular junction. Each nAchR subunit confers differential attributes to channel properties, including activation, deactivation and desensitization kinetics, pH sensitivity, cation permeability, and binding to allosteric modulators. CHRNA4 forms heteropentameric neuronal acetylcholine receptors with CHRNB2 and CHRNB4, as well as CHRNA5 and CHRNB3 as accesory subunits. Is the most abundant nAChR subtype expressed in the central nervous system. Found in two major stoichiometric forms,(CHRNA4)3:(CHRNB2)2 and (CHRNA4)2:(CHRNB2)3, the two stoichiometric forms differ in their unitary conductance, calcium permeability, ACh sensitivity and potentiation by divalent cation. Involved in the modulation of calcium-dependent signaling pathways, influences the release of neurotransmitters, including dopamine, glutamate and GABA. The polypeptide is Neuronal acetylcholine receptor subunit alpha-4 (Chrna4) (Mus musculus (Mouse)).